The following is a 172-amino-acid chain: 3-hydroxydecanoyl-[acyl-carrier-protein] dehydratase (172 aa).

H71 is an active-site residue.

Belongs to the thioester dehydratase family. FabA subfamily. Homodimer.

It localises to the cytoplasm. It catalyses the reaction a (3R)-hydroxyacyl-[ACP] = a (2E)-enoyl-[ACP] + H2O. It carries out the reaction (3R)-hydroxydecanoyl-[ACP] = (2E)-decenoyl-[ACP] + H2O. The enzyme catalyses (2E)-decenoyl-[ACP] = (3Z)-decenoyl-[ACP]. Its pathway is lipid metabolism; fatty acid biosynthesis. Necessary for the introduction of cis unsaturation into fatty acids. Catalyzes the dehydration of (3R)-3-hydroxydecanoyl-ACP to E-(2)-decenoyl-ACP and then its isomerization to Z-(3)-decenoyl-ACP. Can catalyze the dehydratase reaction for beta-hydroxyacyl-ACPs with saturated chain lengths up to 16:0, being most active on intermediate chain length. The chain is 3-hydroxydecanoyl-[acyl-carrier-protein] dehydratase from Brucella anthropi (strain ATCC 49188 / DSM 6882 / CCUG 24695 / JCM 21032 / LMG 3331 / NBRC 15819 / NCTC 12168 / Alc 37) (Ochrobactrum anthropi).